A 152-amino-acid polypeptide reads, in one-letter code: Nucleoside diphosphate kinase A (152 aa).

The ATP site is built by K12, F60, R88, and T94. A Glycyl lysine isopeptide (Lys-Gly) (interchain with G-Cter in ubiquitin) cross-link involves residue K100. ATP is bound by residues R105 and N115. H118 acts as the Pros-phosphohistidine intermediate in catalysis. A phosphoserine mark is found at S120, S122, and S125.

Belongs to the NDK family. In terms of assembly, hexamer of two different chains: An and B (A6, A5B, A4B2, A3B3, A2B4, AB5, B6). Interacts with PRUNE1. Component of the SET complex, composed of at least ANP32A, APEX1, HMGB2, NME1, SET and TREX1. Within this complex, interacts directly with SET. Also interacts with TREX1, but only following translocation to the nucleus. Mg(2+) serves as cofactor. Isoform 1 is expressed in heart, brain, placenta, lung, liver, skeletal muscle, pancreas, spleen and thymus. Expressed in lung carcinoma cell lines but not in normal lung tissues. Isoform 2 is ubiquitously expressed and its expression is also related to tumor differentiation.

The protein localises to the cytoplasm. The protein resides in the nucleus. The enzyme catalyses a 2'-deoxyribonucleoside 5'-diphosphate + ATP = a 2'-deoxyribonucleoside 5'-triphosphate + ADP. The catalysed reaction is a ribonucleoside 5'-diphosphate + ATP = a ribonucleoside 5'-triphosphate + ADP. Its activity is regulated as follows. Autophosphorylation at His-118 increases serine/threonine protein kinase activity of the enzyme. Interaction with the SET complex inhibits the endonuclease activity. Functionally, major role in the synthesis of nucleoside triphosphates other than ATP. The ATP gamma phosphate is transferred to the NDP beta phosphate via a ping-pong mechanism, using a phosphorylated active-site intermediate. Possesses nucleoside-diphosphate kinase, serine/threonine-specific protein kinase, geranyl and farnesyl pyrophosphate kinase, histidine protein kinase and 3'-5' exonuclease activities. Involved in cell proliferation, differentiation and development, signal transduction, G protein-coupled receptor endocytosis, and gene expression. Required for neural development including neural patterning and cell fate determination. During GZMA-mediated cell death, works in concert with TREX1. NME1 nicks one strand of DNA and TREX1 removes bases from the free 3' end to enhance DNA damage and prevent DNA end reannealing and rapid repair. This Homo sapiens (Human) protein is Nucleoside diphosphate kinase A (NME1).